The primary structure comprises 303 residues: UDP-N-acetylenolpyruvoylglucosamine reductase (303 aa).

Residues 27 to 207 form the FAD-binding PCMH-type domain; the sequence is KVGGISQVFY…TSISQKLQKI (181 aa). The active site involves arginine 175. The active-site Proton donor is the serine 224. Glutamate 294 is a catalytic residue.

Belongs to the MurB family. FAD serves as cofactor.

It is found in the cytoplasm. It carries out the reaction UDP-N-acetyl-alpha-D-muramate + NADP(+) = UDP-N-acetyl-3-O-(1-carboxyvinyl)-alpha-D-glucosamine + NADPH + H(+). The protein operates within cell wall biogenesis; peptidoglycan biosynthesis. Its function is as follows. Cell wall formation. This Orientia tsutsugamushi (strain Boryong) (Rickettsia tsutsugamushi) protein is UDP-N-acetylenolpyruvoylglucosamine reductase.